Consider the following 350-residue polypeptide: Vetispiradiene synthase 3 (350 aa).

5 residues coordinate Mg(2+): Asp-103, Asp-107, Asp-246, Thr-250, and Glu-254. The short motif at 103-107 is the DDXXD motif element; it reads DDTFD.

It belongs to the terpene synthase family. Tpsa subfamily. The cofactor is Mg(2+).

It is found in the cytoplasm. It catalyses the reaction (2E,6E)-farnesyl diphosphate = (-)-vetispiradiene + diphosphate. It participates in secondary metabolite biosynthesis; terpenoid biosynthesis. Its function is as follows. Sesquiterpene synthase that catalyzes the formation of vetispiradiene from trans,trans-farnesyl diphosphate. The initial internal cyclization produces the monocyclic intermediate germacrene A. In Hyoscyamus muticus (Egyptian henbane), this protein is Vetispiradiene synthase 3.